A 250-amino-acid chain; its full sequence is Electron transport regulator A (250 aa).

Residues 164 to 237 (KNAEERLAAF…GKYIIIVDHH (74 aa)) enclose the HTH crp-type domain. A DNA-binding region (H-T-H motif) is located at residues 197–216 (RGDIGNYLGLTVETISRLLG).

In terms of assembly, monomer.

Regulates anaerobic growth on fumarate, nitrite, Fe(3+), TMAO, DMSO, thiosulfate and sulfite, but not on nitrate nor Mn(4+). In Shewanella oneidensis (strain ATCC 700550 / JCM 31522 / CIP 106686 / LMG 19005 / NCIMB 14063 / MR-1), this protein is Electron transport regulator A (etrA).